The sequence spans 264 residues: H-2 class II histocompatibility antigen, E-D beta chain (264 aa).

The first 31 residues, 1–31 (MVWLPRVPCVAAVILLLTVLSPPVALVRDTR), serve as a signal peptide directing secretion. The segment at 32 to 121 (PRFLEYVTSE…ISDKFLVRRR (90 aa)) is beta-1. Residues 32-225 (PRFLEYVTSE…KAQSTSAQNK (194 aa)) are Extracellular-facing. 2 disulfides stabilise this stretch: Cys42-Cys106 and Cys144-Cys200. An N-linked (GlcNAc...) asparagine glycan is attached at Asn46. The segment at 122-215 (VEPTVTVYPT…SLTDPVTVEW (94 aa)) is beta-2. Residues 124–214 (PTVTVYPTKT…PSLTDPVTVE (91 aa)) form the Ig-like C1-type domain. Residues 216–225 (KAQSTSAQNK) form a connecting peptide region. The chain crosses the membrane as a helical span at residues 226–248 (MLSGVGGFVLGLLFLGAGLFIYF). Topologically, residues 249 to 264 (RNQKGQSGLQPTGLLS) are cytoplasmic.

The protein belongs to the MHC class II family.

It localises to the membrane. This Mus musculus (Mouse) protein is H-2 class II histocompatibility antigen, E-D beta chain.